Reading from the N-terminus, the 263-residue chain is MKNKNVIQKMREKTPLIHCITNYVTINDCANILLSFGASPAMCEAYDEVYDFVSISSALYINLGTLTKEQETAAVLASISAKNHNVPVVIDPVGCPAIKRKVEVINRIAEVGRIDIIKGNIGEIKFLAGMDSETRGVDSLDNGENALDACTQLAKKYNCIVAATGEKDFVSDGKRGSVIKNGTEMLTKVTGAGCMLGALCAATCANFEDKLVSTTAAILSMNIAGEKAYEEAQLPGSFRIALIDNIYMISDEEIWERGNVEWK.

M42 is a binding site for substrate. Residues K118 and T164 each contribute to the ATP site. G191 contacts substrate.

The protein belongs to the Thz kinase family. Requires Mg(2+) as cofactor.

It carries out the reaction 5-(2-hydroxyethyl)-4-methylthiazole + ATP = 4-methyl-5-(2-phosphooxyethyl)-thiazole + ADP + H(+). It functions in the pathway cofactor biosynthesis; thiamine diphosphate biosynthesis; 4-methyl-5-(2-phosphoethyl)-thiazole from 5-(2-hydroxyethyl)-4-methylthiazole: step 1/1. Functionally, catalyzes the phosphorylation of the hydroxyl group of 4-methyl-5-beta-hydroxyethylthiazole (THZ). The sequence is that of Hydroxyethylthiazole kinase 1 from Clostridium botulinum (strain ATCC 19397 / Type A).